Consider the following 188-residue polypeptide: Peptide deformylase (188 aa).

Fe cation is bound by residues C94 and H136. Residue E137 is part of the active site. Residue H140 coordinates Fe cation.

Belongs to the polypeptide deformylase family. The cofactor is Fe(2+).

The catalysed reaction is N-terminal N-formyl-L-methionyl-[peptide] + H2O = N-terminal L-methionyl-[peptide] + formate. In terms of biological role, removes the formyl group from the N-terminal Met of newly synthesized proteins. Requires at least a dipeptide for an efficient rate of reaction. N-terminal L-methionine is a prerequisite for activity but the enzyme has broad specificity at other positions. This is Peptide deformylase from Chlorobium phaeobacteroides (strain DSM 266 / SMG 266 / 2430).